The primary structure comprises 474 residues: Poly(A) polymerase catalytic subunit (474 aa).

Catalysis depends on residues aspartate 193 and aspartate 195.

It belongs to the poxviridae poly(A) polymerase catalytic subunit family. In terms of assembly, heterodimer of a large (catalytic) subunit and a small (regulatory) subunit.

The catalysed reaction is RNA(n) + ATP = RNA(n)-3'-adenine ribonucleotide + diphosphate. In terms of biological role, polymerase that creates the 3'-poly(A) tail of mRNA's. In Bos taurus (Bovine), this protein is Poly(A) polymerase catalytic subunit (PAPL).